A 333-amino-acid polypeptide reads, in one-letter code: Taste receptor type 2 member 38 (333 aa).

At 1–17 (MLTLTRICAVSYEVRST) the chain is on the extracellular side. Residues 18 to 38 (FLFISVLEFAVGFLTNAFIFL) traverse the membrane as a helical segment. Residues 39-55 (VNFWDVVKRQPLSNSDC) are Cytoplasmic-facing. A helical membrane pass occupies residues 56 to 76 (VLLCLSISRLFLHGLLFLSAI). Residues 77-94 (QLTHFQKLSEPLNHSYQA) lie on the Extracellular side of the membrane. Residues 95 to 115 (IIMLWIIANQANLWLAACLSL) form a helical membrane-spanning segment. The Cytoplasmic portion of the chain corresponds to 116–142 (LYCSKLIRFSHTFLICLASWVSRKISQ). A helical transmembrane segment spans residues 143 to 163 (MLLGIILCSCICTVLCVWCFF). The Extracellular segment spans residues 164-190 (SRPHFTVTTFLFMNNNTRLNWQIKDLN). An N-linked (GlcNAc...) asparagine glycan is attached at asparagine 178. A helical transmembrane segment spans residues 191–211 (LFYSFLFCYLWSVPPFLLFLV). Residues 212–251 (SSGMLTVSLGRHMRTMKVYTRDSRDPSLEAHIKALKSLVS) lie on the Cytoplasmic side of the membrane. The helical transmembrane segment at 252–272 (FFCFFVISSCAAFISVPLLIL) threads the bilayer. Over 273-276 (WRNK) the chain is Extracellular. The helical transmembrane segment at 277 to 297 (IGVMVCVGIMAACPSGHAAVL) threads the bilayer. Residues 298–333 (ISGNATLRRAVTTILLWAQSSMKVRADHKADSRTLC) lie on the Cytoplasmic side of the membrane.

It belongs to the G-protein coupled receptor T2R family.

Its subcellular location is the membrane. In terms of biological role, receptor that may play a role in the perception of bitterness and is gustducin-linked. May play a role in sensing the chemical composition of the gastrointestinal content. The activity of this receptor may stimulate alpha gustducin, mediate PLC-beta-2 activation and lead to the gating of TRPM5. The polypeptide is Taste receptor type 2 member 38 (TAS2R38) (Pongo pygmaeus (Bornean orangutan)).